The chain runs to 214 residues: MKPPALTPRLLLRAYALGIFPMAESRDDPEIHWIDPRHRGIFPLDGFHISRSLARRIRRMDWRVSVDEDFAATVEACADREETWINPTIFRLYVELHALGHAHSLEVREGETLVGGVYGVTLGRAFFGESMFSHRTDASKVALAFLIDRLRAGGFTLFDTQFLTPHLASLGAIEIRRSDYHQRLTVALEGNASFTPEGYWADPASVVQRNSQTS.

It belongs to the L/F-transferase family.

The protein localises to the cytoplasm. The catalysed reaction is N-terminal L-lysyl-[protein] + L-leucyl-tRNA(Leu) = N-terminal L-leucyl-L-lysyl-[protein] + tRNA(Leu) + H(+). It carries out the reaction N-terminal L-arginyl-[protein] + L-leucyl-tRNA(Leu) = N-terminal L-leucyl-L-arginyl-[protein] + tRNA(Leu) + H(+). The enzyme catalyses L-phenylalanyl-tRNA(Phe) + an N-terminal L-alpha-aminoacyl-[protein] = an N-terminal L-phenylalanyl-L-alpha-aminoacyl-[protein] + tRNA(Phe). Its function is as follows. Functions in the N-end rule pathway of protein degradation where it conjugates Leu, Phe and, less efficiently, Met from aminoacyl-tRNAs to the N-termini of proteins containing an N-terminal arginine or lysine. This is Leucyl/phenylalanyl-tRNA--protein transferase from Cereibacter sphaeroides (strain ATCC 17029 / ATH 2.4.9) (Rhodobacter sphaeroides).